The sequence spans 340 residues: Glycerol-3-phosphate dehydrogenase [NAD(P)+] (340 aa).

4 residues coordinate NADPH: Ser14, Phe15, Arg35, and Lys108. Lys108 and Gly136 together coordinate sn-glycerol 3-phosphate. An NADPH-binding site is contributed by Ala140. Sn-glycerol 3-phosphate contacts are provided by Lys191, Asp244, Ser254, Arg255, and Asn256. The active-site Proton acceptor is Lys191. Arg255 serves as a coordination point for NADPH. Position 281 (Glu281) interacts with NADPH.

It belongs to the NAD-dependent glycerol-3-phosphate dehydrogenase family.

The protein localises to the cytoplasm. The enzyme catalyses sn-glycerol 3-phosphate + NAD(+) = dihydroxyacetone phosphate + NADH + H(+). It carries out the reaction sn-glycerol 3-phosphate + NADP(+) = dihydroxyacetone phosphate + NADPH + H(+). Its pathway is membrane lipid metabolism; glycerophospholipid metabolism. Functionally, catalyzes the reduction of the glycolytic intermediate dihydroxyacetone phosphate (DHAP) to sn-glycerol 3-phosphate (G3P), the key precursor for phospholipid synthesis. This is Glycerol-3-phosphate dehydrogenase [NAD(P)+] from Pseudomonas paraeruginosa (strain DSM 24068 / PA7) (Pseudomonas aeruginosa (strain PA7)).